Reading from the N-terminus, the 306-residue chain is Putative S-adenosyl-L-methionine-dependent methyltransferase MAP_4190c (306 aa).

Residues Asp129 and 158 to 159 (DL) contribute to the S-adenosyl-L-methionine site.

The protein belongs to the UPF0677 family.

In terms of biological role, exhibits S-adenosyl-L-methionine-dependent methyltransferase activity. The polypeptide is Putative S-adenosyl-L-methionine-dependent methyltransferase MAP_4190c (Mycolicibacterium paratuberculosis (strain ATCC BAA-968 / K-10) (Mycobacterium paratuberculosis)).